The chain runs to 84 residues: Large ribosomal subunit protein bL27 (84 aa).

Residues 1–21 are disordered; the sequence is MAHKKGGGSTKNGRDSNPKYL.

This sequence belongs to the bacterial ribosomal protein bL27 family.

The sequence is that of Large ribosomal subunit protein bL27 from Chlorobium limicola (strain DSM 245 / NBRC 103803 / 6330).